The primary structure comprises 264 residues: Thymidylate synthase (264 aa).

Position 21 (Arg21) interacts with dUMP. His51 lines the (6R)-5,10-methylene-5,6,7,8-tetrahydrofolate pocket. Residue 126-127 (RR) coordinates dUMP. Cys146 acts as the Nucleophile in catalysis. Residues 166-169 (RSAD), Asn177, and 207-209 (HLY) contribute to the dUMP site. Residue Asp169 participates in (6R)-5,10-methylene-5,6,7,8-tetrahydrofolate binding. Ala263 is a (6R)-5,10-methylene-5,6,7,8-tetrahydrofolate binding site.

Belongs to the thymidylate synthase family. Bacterial-type ThyA subfamily. As to quaternary structure, homodimer.

The protein localises to the cytoplasm. The catalysed reaction is dUMP + (6R)-5,10-methylene-5,6,7,8-tetrahydrofolate = 7,8-dihydrofolate + dTMP. It participates in pyrimidine metabolism; dTTP biosynthesis. In terms of biological role, catalyzes the reductive methylation of 2'-deoxyuridine-5'-monophosphate (dUMP) to 2'-deoxythymidine-5'-monophosphate (dTMP) while utilizing 5,10-methylenetetrahydrofolate (mTHF) as the methyl donor and reductant in the reaction, yielding dihydrofolate (DHF) as a by-product. This enzymatic reaction provides an intracellular de novo source of dTMP, an essential precursor for DNA biosynthesis. This is Thymidylate synthase from Hyphomonas neptunium (strain ATCC 15444).